Consider the following 138-residue polypeptide: Putative membrane protein insertion efficiency factor (138 aa).

The tract at residues 71 to 138 (YDPVPGTPEA…GTPSHTRGEN (68 aa)) is disordered. Basic and acidic residues predominate over residues 81–113 (RQWRELHPETARSKNEPIHDLTDDNPRDHEPAL). Residues 123–138 (PGSTHTGTPSHTRGEN) are compositionally biased toward polar residues.

This sequence belongs to the UPF0161 family.

It localises to the cell membrane. Functionally, could be involved in insertion of integral membrane proteins into the membrane. The sequence is that of Putative membrane protein insertion efficiency factor from Cutibacterium acnes (strain DSM 16379 / KPA171202) (Propionibacterium acnes).